An 87-amino-acid polypeptide reads, in one-letter code: Putative defensin-like protein 304 (87 aa).

Residues 1–19 form the signal peptide; it reads MKSNKVTFFLGLFLVSAFC. Disulfide bonds link C27–C46, C33–C51, and C40–C53.

Belongs to the DEFL family.

The protein resides in the secreted. The sequence is that of Putative defensin-like protein 304 from Arabidopsis thaliana (Mouse-ear cress).